The following is a 246-amino-acid chain: Mast cell protease-like protein (246 aa).

The first 18 residues, 1-18 (MQALLFLMALLLPSGAGA), serve as a signal peptide directing secretion. A propeptide spans 19–20 (EE) (activation peptide). The region spanning 21–244 (IIGGVESEPH…HVPWINRVIK (224 aa)) is the Peptidase S1 domain. A disulfide bridge links cysteine 50 with cysteine 66. Catalysis depends on charge relay system residues histidine 65 and aspartate 109. Disulfide bonds link cysteine 143–cysteine 208 and cysteine 174–cysteine 187. The Charge relay system role is filled by serine 202.

This sequence belongs to the peptidase S1 family. Granzyme subfamily.

This Mus musculus (Mouse) protein is Mast cell protease-like protein (Mcptl).